We begin with the raw amino-acid sequence, 530 residues long: DEK domain-containing chromatin-associated protein 2 (530 aa).

Basic and acidic residues-rich tracts occupy residues 1–47 (MATE…AEEE) and 57–68 (AKEGELGEKDKE). Positions 1 to 130 (MATETLDEKT…PSKSVSIEKG (130 aa)) are disordered. Residues 41-61 (IGEAEEEKKEDEEEGEAKEGE) are a coiled coil. Over residues 69–82 (DDVESEEEEEEEEG) the composition is skewed to acidic residues. 2 stretches are compositionally biased toward basic and acidic residues: residues 83-93 (SGSKKSSEKET) and 100-110 (RPTRERKKVER). Positions 185-205 (EKEEEKQRARIKEKIDKCVKE) form a coiled coil. The segment at 246-430 (IIADQEKAKK…GKAKAEPTRK (185 aa)) is disordered. Residues 253 to 263 (AKKRKSTPKRG) show a composition bias toward basic residues. The short motif at 260 to 267 (PKRGKSGE) is the Nuclear localization signal 1 element. Acidic residues predominate over residues 286 to 332 (SDTEEGKDEGDADSEGTNDPHEEDDAAPEEESDHEKTDTDDEKDEVE). Short sequence motifs (nuclear localization signal) lie at residues 343 to 350 (SKKTVEES) and 384 to 391 (AKKQKVDH). A compositionally biased stretch (polar residues) spans 374 to 384 (KQIAKSTSSPA). Basic and acidic residues predominate over residues 387–397 (QKVDHVESSKE). A DEK-C domain is found at 426-481 (EPTRKEMLEVVSKILKEVDFNTATLSDILQKLSDHFGVELSHRKPEVKDVITEAIN). 2 DNA-binding regions span residues 444-458 (DFNTATLSDILQKLS) and 473-477 (KDVIT). Residues 482–530 (AMTDDEEEDEEEEAEAGSDKEKEEVKGEEEEEKAEAESDKEKEKEEPKD) form a disordered region. Positions 484-497 (TDDEEEDEEEEAEA) are enriched in acidic residues. Positions 492 to 527 (EEEAEAGSDKEKEEVKGEEEEEKAEAESDKEKEKEE) form a coiled coil. Positions 516 to 530 (EAESDKEKEKEEPKD) are enriched in basic and acidic residues.

In terms of assembly, found in a mRNA splicing-dependent exon junction complex (EJC). Binds specifically histones H3 and H4.

Its subcellular location is the nucleus. It is found in the nucleolus. In terms of biological role, chromatin-associated protein which contributes to the modulation of chromatin structure (such as super-helical structure of DNA) and function. Binds to chromatin of protein-coding genes throughout the genome to regulate nucleosome occupancy and chromatin accessibility, and to modulate the expression of target genes. This is DEK domain-containing chromatin-associated protein 2 from Arabidopsis thaliana (Mouse-ear cress).